The chain runs to 132 residues: Small ribosomal subunit protein bS6 (132 aa).

Positions 99–132 (ASPMVKAKDERRGDRREDFANETADDADAGDSEE) are disordered. Residues 104-117 (KAKDERRGDRREDF) are compositionally biased toward basic and acidic residues. Residues 121-132 (TADDADAGDSEE) are compositionally biased toward acidic residues.

The protein belongs to the bacterial ribosomal protein bS6 family.

In terms of biological role, binds together with bS18 to 16S ribosomal RNA. The sequence is that of Small ribosomal subunit protein bS6 from Serratia proteamaculans (strain 568).